Consider the following 60-residue polypeptide: Large ribosomal subunit protein bL32 (60 aa).

Residues 1-16 (MAVPKRKTSPSKRGMR) show a composition bias toward basic residues. The disordered stretch occupies residues 1 to 60 (MAVPKRKTSPSKRGMRRSADALKAPTYVEDKNSGELRRPHHVDLKTGMYRGRQVLEPKEA). Residues 28–44 (VEDKNSGELRRPHHVDL) are compositionally biased toward basic and acidic residues.

The protein belongs to the bacterial ribosomal protein bL32 family.

The chain is Large ribosomal subunit protein bL32 from Chelativorans sp. (strain BNC1).